The chain runs to 459 residues: Cysteine--tRNA ligase (459 aa).

Residue cysteine 28 participates in Zn(2+) binding. Positions 30–40 (VTVYDLCHIGH) match the 'HIGH' region motif. Residues cysteine 209, histidine 234, and glutamate 238 each contribute to the Zn(2+) site. The 'KMSKS' region signature appears at 266–270 (KMSKS). ATP is bound at residue lysine 269.

The protein belongs to the class-I aminoacyl-tRNA synthetase family. In terms of assembly, monomer. Zn(2+) is required as a cofactor.

The protein localises to the cytoplasm. It carries out the reaction tRNA(Cys) + L-cysteine + ATP = L-cysteinyl-tRNA(Cys) + AMP + diphosphate. The protein is Cysteine--tRNA ligase of Shewanella oneidensis (strain ATCC 700550 / JCM 31522 / CIP 106686 / LMG 19005 / NCIMB 14063 / MR-1).